Reading from the N-terminus, the 276-residue chain is 5-deoxy-glucuronate isomerase (276 aa).

This sequence belongs to the isomerase IolB family.

It catalyses the reaction 5-deoxy-D-glucuronate = 5-dehydro-2-deoxy-D-gluconate. It participates in polyol metabolism; myo-inositol degradation into acetyl-CoA; acetyl-CoA from myo-inositol: step 4/7. Involved in the isomerization of 5-deoxy-glucuronate (5DG) to 5-dehydro-2-deoxy-D-gluconate (DKG or 2-deoxy-5-keto-D-gluconate). The chain is 5-deoxy-glucuronate isomerase from Geobacillus kaustophilus (strain HTA426).